Reading from the N-terminus, the 1338-residue chain is Aldehyde oxidase (1338 aa).

The 2Fe-2S ferredoxin-type domain occupies 5 to 92; it reads SELLFYVNGR…GAAVTTVEGI (88 aa). Residues Cys44, Cys49, Cys52, and Cys74 each coordinate [2Fe-2S] cluster. Residue Gln113 participates in Mo-molybdopterin binding. Positions 114, 117, 149, and 151 each coordinate [2Fe-2S] cluster. Cys151 lines the Mo-molybdopterin pocket. Residues 236-421 form the FAD-binding PCMH-type domain; that stretch reads FGSERMMWFS…VSVNIPYSRK (186 aa). FAD-binding positions include 264 to 271, Ala345, Ser354, His358, Asp367, and Leu411; that span reads VIMGNTSV. Residues 806 to 807 and Met1047 each bind Mo-molybdopterin; that span reads AF. Ser1068 carries the phosphoserine modification. Mo-molybdopterin contacts are provided by residues 1088-1091, Gln1203, and Leu1268; that span reads GSVV. The active-site Proton acceptor; for azaheterocycle hydroxylase activity is the Glu1270.

It belongs to the xanthine dehydrogenase family. As to quaternary structure, homodimer. It depends on [2Fe-2S] cluster as a cofactor. The cofactor is FAD. Mo-molybdopterin serves as cofactor. Abundant in liver, expressed in adipose tissue and at lower levels in lung, skeletal muscle, pancreas. In contrast to mice, no significant gender difference in AOX1 expression level (at protein level).

The protein localises to the cytoplasm. It catalyses the reaction an aldehyde + O2 + H2O = a carboxylate + H2O2 + H(+). It carries out the reaction retinal + O2 + H2O = retinoate + H2O2 + H(+). Is very potently inhibited by raloxifene. Also inhibited by estradiol, ethinyl estradiol, hydralazine, menadione, isovanillin and thioridazine. Not inhibited by allopurinol, a xanthine dehydrogenase potent inhibitor. Oxidase with broad substrate specificity, oxidizing aromatic azaheterocycles, such as N1-methylnicotinamide, N-methylphthalazinium and phthalazine, as well as aldehydes, such as benzaldehyde, retinal, pyridoxal, and vanillin. Plays a key role in the metabolism of xenobiotics and drugs containing aromatic azaheterocyclic substituents. Participates in the bioactivation of prodrugs such as famciclovir, catalyzing the oxidation step from 6-deoxypenciclovir to penciclovir, which is a potent antiviral agent. Is probably involved in the regulation of reactive oxygen species homeostasis. May be a prominent source of superoxide generation via the one-electron reduction of molecular oxygen. May also catalyze nitric oxide (NO) production via the reduction of nitrite to NO with NADH or aldehyde as electron donor. May play a role in adipogenesis. In Homo sapiens (Human), this protein is Aldehyde oxidase.